A 229-amino-acid chain; its full sequence is ATP synthase subunit a (229 aa).

Helical transmembrane passes span 24–44, 45–65, 83–103, 117–137, 143–163, 177–199, and 206–228; these read RLCF…LLFC, LFDL…FMLF, LLFC…CFLC, FMDV…SLLC, FLRL…FFDF, CYFI…LYLL, and LQLF…FLLF.

It belongs to the ATPase A chain family. F-type ATPases have 2 components, CF(1) - the catalytic core - and CF(0) - the membrane proton channel. CF(1) has five subunits: alpha(3), beta(3), gamma(1), delta(1), epsilon(1). CF(0) has three main subunits: a, b and c.

Its subcellular location is the mitochondrion inner membrane. Its function is as follows. Mitochondrial membrane ATP synthase (F(1)F(0) ATP synthase or Complex V) produces ATP from ADP in the presence of a proton gradient across the membrane which is generated by electron transport complexes of the respiratory chain. F-type ATPases consist of two structural domains, F(1) - containing the extramembraneous catalytic core and F(0) - containing the membrane proton channel, linked together by a central stalk and a peripheral stalk. During catalysis, ATP synthesis in the catalytic domain of F(1) is coupled via a rotary mechanism of the central stalk subunits to proton translocation. Key component of the proton channel; it may play a direct role in the translocation of protons across the membrane. The protein is ATP synthase subunit a (ATP6) of Trypanosoma brucei brucei.